We begin with the raw amino-acid sequence, 54 residues long: Ovomucoid (54 aa).

In terms of domain architecture, Kazal-like spans 4–54 (VDCSDYPKPVCSPENMPVCGSDSKTYSNKCDFCNAVADSNGTLTLSHFGKC). 3 disulfides stabilise this stretch: Cys-6/Cys-36, Cys-14/Cys-33, and Cys-22/Cys-54. Asn-43 carries an N-linked (GlcNAc...) asparagine glycan.

It localises to the secreted. This Nycticorax nycticorax (Black-crowned night-heron) protein is Ovomucoid.